Here is a 164-residue protein sequence, read N- to C-terminus: Transcription elongation factor GreA (164 aa).

This sequence belongs to the GreA/GreB family.

Necessary for efficient RNA polymerase transcription elongation past template-encoded arresting sites. The arresting sites in DNA have the property of trapping a certain fraction of elongating RNA polymerases that pass through, resulting in locked ternary complexes. Cleavage of the nascent transcript by cleavage factors such as GreA or GreB allows the resumption of elongation from the new 3'terminus. GreA releases sequences of 2 to 3 nucleotides. The protein is Transcription elongation factor GreA of Helicobacter pylori (strain Shi470).